A 519-amino-acid polypeptide reads, in one-letter code: Probable anion transporter 3, chloroplastic (519 aa).

The N-terminal 76 residues, 1–76 (MAPPGQLLPL…PPPPATSLPG (76 aa)), are a transit peptide targeting the chloroplast. Residues 56–72 (LPFAPPRRLSRPPPPAT) show a composition bias toward pro residues. Positions 56-82 (LPFAPPRRLSRPPPPATSLPGASPGGG) are disordered. 12 helical membrane-spanning segments follow: residues 100–120 (VAAMLGLALALCNADRVVMSV), 138–158 (VVQSSFLWGYLVSPIIGGALV), 166–186 (VMAYGVALWSLATFLSPWAAA), 188–208 (SLWLFLSTRVLLGMAEGVALP), 229–249 (IAMAGFQLGNTIGLLLSPIIM), 253–273 (GIFGPFVIFGLFGFLWVLVWI), 326–346 (WALISANAMHSWGYFVILSWM), 362–382 (AWFSALPWVMMAVLGYVAGVV), 403–423 (IGFVGPGVALLGLNAAKSPVI), 424–444 (ASAWLTIAVGLKSFGHSGFLV), 460–480 (MSNTAGTFAAILGTVGAGFFV), and 488–508 (GFLILTSLLYFSSTLFWDIFA).

Belongs to the major facilitator superfamily. Sodium/anion cotransporter (TC 2.A.1.14) family.

It localises to the plastid. The protein resides in the chloroplast membrane. Functionally, probable anion transporter. This chain is Probable anion transporter 3, chloroplastic (PHT4;3), found in Oryza sativa subsp. japonica (Rice).